Reading from the N-terminus, the 322-residue chain is Putative UDP-N-acetylglucosamine--dolichyl-phosphate N-acetylglucosaminephosphotransferase (322 aa).

The next 9 membrane-spanning stretches (helical) occupy residues 5–25, 46–66, 76–96, 102–122, 123–143, 160–180, 186–206, 222–242, and 295–315; these read AILL…VWVI, IPLL…FSLL, IPAV…DDIF, VRAF…VGHS, IISI…IIII, LNGL…YIGL, TYQA…FLIF, FIGA…ALAI, and YQVV…AVIL.

The protein belongs to the glycosyltransferase 4 family.

It localises to the cell membrane. It carries out the reaction a di-trans,poly-cis-dolichyl phosphate + UDP-N-acetyl-alpha-D-glucosamine = an N-acetyl-alpha-D-glucosaminyl-diphospho-di-trans,poly-cis-dolichol + UMP. With respect to regulation, inhibited by tunicamycin. This Saccharolobus solfataricus (strain ATCC 35092 / DSM 1617 / JCM 11322 / P2) (Sulfolobus solfataricus) protein is Putative UDP-N-acetylglucosamine--dolichyl-phosphate N-acetylglucosaminephosphotransferase (gnpTA).